A 61-amino-acid chain; its full sequence is Large ribosomal subunit protein bL28 (61 aa).

This sequence belongs to the bacterial ribosomal protein bL28 family.

This is Large ribosomal subunit protein bL28 from Lactobacillus gasseri (strain ATCC 33323 / DSM 20243 / BCRC 14619 / CIP 102991 / JCM 1131 / KCTC 3163 / NCIMB 11718 / NCTC 13722 / AM63).